Consider the following 239-residue polypeptide: Ribosomal RNA small subunit methyltransferase G (239 aa).

Residues glycine 78, phenylalanine 83, alanine 129 to glutamate 130, and arginine 148 contribute to the S-adenosyl-L-methionine site.

Belongs to the methyltransferase superfamily. RNA methyltransferase RsmG family.

The protein resides in the cytoplasm. In terms of biological role, specifically methylates the N7 position of a guanine in 16S rRNA. The sequence is that of Ribosomal RNA small subunit methyltransferase G from Alkaliphilus oremlandii (strain OhILAs) (Clostridium oremlandii (strain OhILAs)).